Here is a 227-residue protein sequence, read N- to C-terminus: Transcription elongation factor A protein-like 2 (227 aa).

2 disordered regions span residues 1–145 (MEKL…TNKG) and 202–227 (FYPR…IPYV). Basic and acidic residues-rich tracts occupy residues 18 to 43 (IDNE…KLEN), 50 to 82 (TGKR…KGKS), 90 to 113 (TEGK…REPE), 120 to 136 (SETR…DIPR), and 206 to 227 (GPRE…IPYV).

Belongs to the TFS-II family. TFA subfamily.

Its subcellular location is the nucleus. Its function is as follows. May be involved in transcriptional regulation. In Homo sapiens (Human), this protein is Transcription elongation factor A protein-like 2 (TCEAL2).